Consider the following 171-residue polypeptide: MRILGIDPGLRLTGFGLIEQTGQKLAYVASGVVKSGEGSLPARLGILFGGINEVIATYRPDTCAVEIVFVNVNPQSTLLLGQARGAAICAAVSNDLTVAEYTALQIKQAVVGHGKAAKTQVQEMVKRLLALPIAPTADAADALACAITHAHGSRLGAQSTAGYRLKGGRLV.

Catalysis depends on residues Asp-7, Glu-66, and Asp-138. Positions 7, 66, and 138 each coordinate Mg(2+).

Belongs to the RuvC family. In terms of assembly, homodimer which binds Holliday junction (HJ) DNA. The HJ becomes 2-fold symmetrical on binding to RuvC with unstacked arms; it has a different conformation from HJ DNA in complex with RuvA. In the full resolvosome a probable DNA-RuvA(4)-RuvB(12)-RuvC(2) complex forms which resolves the HJ. Mg(2+) serves as cofactor.

Its subcellular location is the cytoplasm. It carries out the reaction Endonucleolytic cleavage at a junction such as a reciprocal single-stranded crossover between two homologous DNA duplexes (Holliday junction).. Its function is as follows. The RuvA-RuvB-RuvC complex processes Holliday junction (HJ) DNA during genetic recombination and DNA repair. Endonuclease that resolves HJ intermediates. Cleaves cruciform DNA by making single-stranded nicks across the HJ at symmetrical positions within the homologous arms, yielding a 5'-phosphate and a 3'-hydroxyl group; requires a central core of homology in the junction. The consensus cleavage sequence is 5'-(A/T)TT(C/G)-3'. Cleavage occurs on the 3'-side of the TT dinucleotide at the point of strand exchange. HJ branch migration catalyzed by RuvA-RuvB allows RuvC to scan DNA until it finds its consensus sequence, where it cleaves and resolves the cruciform DNA. This chain is Crossover junction endodeoxyribonuclease RuvC, found in Thiobacillus denitrificans (strain ATCC 25259 / T1).